The primary structure comprises 283 residues: Thymidylate synthase (283 aa).

R22 lines the dUMP pocket. C160 serves as the catalytic Nucleophile. DUMP-binding positions include 180 to 183 (RSCD), N191, and 221 to 223 (HIY). Residue D183 participates in (6R)-5,10-methylene-5,6,7,8-tetrahydrofolate binding. S282 is a binding site for (6R)-5,10-methylene-5,6,7,8-tetrahydrofolate.

It belongs to the thymidylate synthase family. Bacterial-type ThyA subfamily. Homodimer.

Its subcellular location is the cytoplasm. It catalyses the reaction dUMP + (6R)-5,10-methylene-5,6,7,8-tetrahydrofolate = 7,8-dihydrofolate + dTMP. It functions in the pathway pyrimidine metabolism; dTTP biosynthesis. In terms of biological role, catalyzes the reductive methylation of 2'-deoxyuridine-5'-monophosphate (dUMP) to 2'-deoxythymidine-5'-monophosphate (dTMP) while utilizing 5,10-methylenetetrahydrofolate (mTHF) as the methyl donor and reductant in the reaction, yielding dihydrofolate (DHF) as a by-product. This enzymatic reaction provides an intracellular de novo source of dTMP, an essential precursor for DNA biosynthesis. In Pasteurella multocida (strain Pm70), this protein is Thymidylate synthase.